Reading from the N-terminus, the 374-residue chain is S-adenosylmethionine:tRNA ribosyltransferase-isomerase (374 aa).

It belongs to the QueA family. As to quaternary structure, monomer.

The protein localises to the cytoplasm. The catalysed reaction is 7-aminomethyl-7-carbaguanosine(34) in tRNA + S-adenosyl-L-methionine = epoxyqueuosine(34) in tRNA + adenine + L-methionine + 2 H(+). It functions in the pathway tRNA modification; tRNA-queuosine biosynthesis. Transfers and isomerizes the ribose moiety from AdoMet to the 7-aminomethyl group of 7-deazaguanine (preQ1-tRNA) to give epoxyqueuosine (oQ-tRNA). The polypeptide is S-adenosylmethionine:tRNA ribosyltransferase-isomerase (Prochlorococcus marinus (strain MIT 9301)).